We begin with the raw amino-acid sequence, 278 residues long: Probable endonuclease 4 (278 aa).

The Zn(2+) site is built by H67, H107, E141, D173, H176, H210, D223, H225, and E255.

Belongs to the AP endonuclease 2 family. Zn(2+) serves as cofactor.

It carries out the reaction Endonucleolytic cleavage to 5'-phosphooligonucleotide end-products.. Functionally, endonuclease IV plays a role in DNA repair. It cleaves phosphodiester bonds at apurinic or apyrimidinic (AP) sites, generating a 3'-hydroxyl group and a 5'-terminal sugar phosphate. The protein is Probable endonuclease 4 of Natronomonas pharaonis (strain ATCC 35678 / DSM 2160 / CIP 103997 / JCM 8858 / NBRC 14720 / NCIMB 2260 / Gabara) (Halobacterium pharaonis).